The following is a 447-amino-acid chain: Glutamyl-tRNA(Gln) amidotransferase subunit A (447 aa).

Residues Lys-51 and Ser-126 each act as charge relay system in the active site. Catalysis depends on Ser-150, which acts as the Acyl-ester intermediate.

The protein belongs to the amidase family. GatA subfamily. As to quaternary structure, heterotrimer of A, B and C subunits.

The enzyme catalyses L-glutamyl-tRNA(Gln) + L-glutamine + ATP + H2O = L-glutaminyl-tRNA(Gln) + L-glutamate + ADP + phosphate + H(+). Its function is as follows. Allows the formation of correctly charged Gln-tRNA(Gln) through the transamidation of misacylated Glu-tRNA(Gln) in organisms which lack glutaminyl-tRNA synthetase. The reaction takes place in the presence of glutamine and ATP through an activated gamma-phospho-Glu-tRNA(Gln). This Helicobacter hepaticus (strain ATCC 51449 / 3B1) protein is Glutamyl-tRNA(Gln) amidotransferase subunit A.